Here is a 606-residue protein sequence, read N- to C-terminus: WD repeat-containing protein 1 (606 aa).

13 WD repeats span residues 4 to 45, 48 to 87, 93 to 135, 138 to 176, 180 to 218, 224 to 263, 270 to 306, 311 to 351, 358 to 408, 432 to 474, 480 to 518, 523 to 561, and 566 to 604; these read EIKK…LRNI, PAVA…IWDT, ILKY…LWDT, SVGE…FFEG, KFKF…IYDG, VCAL…IWDV, STFP…YLDK, KPLR…YWDS, SFSG…KLDV, LKDQ…VYSI, KDEG…VFSV, SENN…VWTL, and TKVK…EWTI. Residues K28, K81, K95, and K115 each carry the N6-acetyllysine modification. Y238 bears the Phosphotyrosine mark. Residue K480 is modified to N6-acetyllysine.

The protein belongs to the WD repeat AIP1 family.

The protein localises to the cytoplasm. The protein resides in the cytoskeleton. It localises to the cell projection. Its subcellular location is the podosome. In terms of biological role, induces disassembly of actin filaments in conjunction with ADF/cofilin family proteins. Enhances cofilin-mediated actin severing. Involved in cytokinesis. Involved in chemotactic cell migration by restricting lamellipodial membrane protrusions. Involved in myocardium sarcomere organization. Required for cardiomyocyte growth and maintenance. Involved in megakaryocyte maturation and platelet shedding. Required for the establishment of planar cell polarity (PCP) during follicular epithelium development and for cell shape changes during PCP; the function seems to implicate cooperation with CFL1 and/or DSTN/ADF. Involved in the generation/maintenance of cortical tension. Involved in assembly and maintenance of epithelial apical cell junctions and plays a role in the organization of the perijunctional actomyosin belt. The chain is WD repeat-containing protein 1 (Wdr1) from Rattus norvegicus (Rat).